The following is a 472-amino-acid chain: PEP-dependent dihydroxyacetone kinase, phosphoryl donor subunit DhaM (472 aa).

Residues 1–135 (MVNLVIVSHS…HALEAKREQL (135 aa)) enclose the PTS EIIA type-4 domain. H9 (tele-phosphohistidine intermediate) is an active-site residue. The 88-residue stretch at 155-242 (ARSLAVVIKN…QLAEDNFGET (88 aa)) folds into the HPr domain. H169 (pros-phosphohistidine intermediate) is an active-site residue. Positions 264 to 472 (QPVLCTVQAK…VKTQRFNRQG (209 aa)) are PTS EI-like, N-terminal part. H430 serves as the catalytic Tele-phosphohistidine intermediate.

Belongs to the PEP-utilizing enzyme family. In terms of assembly, homodimer. The dihydroxyacetone kinase complex is composed of a homodimer of DhaM, a homodimer of DhaK and the subunit DhaL.

The enzyme catalyses dihydroxyacetone + phosphoenolpyruvate = dihydroxyacetone phosphate + pyruvate. The protein operates within polyol metabolism; glycerol degradation. Component of the dihydroxyacetone kinase complex, which is responsible for the phosphoenolpyruvate (PEP)-dependent phosphorylation of dihydroxyacetone. DhaM serves as the phosphoryl donor. Is phosphorylated by phosphoenolpyruvate in an EI- and HPr-dependent reaction, and a phosphorelay system on histidine residues finally leads to phosphoryl transfer to DhaL and dihydroxyacetone. This is PEP-dependent dihydroxyacetone kinase, phosphoryl donor subunit DhaM from Escherichia coli (strain K12).